The following is a 156-amino-acid chain: Ribosomal RNA large subunit methyltransferase H (156 aa).

Residues Leu73, Gly104, and 123–128 (IGPLTL) each bind S-adenosyl-L-methionine.

This sequence belongs to the RNA methyltransferase RlmH family. In terms of assembly, homodimer.

It localises to the cytoplasm. It carries out the reaction pseudouridine(1915) in 23S rRNA + S-adenosyl-L-methionine = N(3)-methylpseudouridine(1915) in 23S rRNA + S-adenosyl-L-homocysteine + H(+). Functionally, specifically methylates the pseudouridine at position 1915 (m3Psi1915) in 23S rRNA. This is Ribosomal RNA large subunit methyltransferase H from Stenotrophomonas maltophilia (strain K279a).